The following is a 498-amino-acid chain: Elastase (498 aa).

An N-terminal signal peptide occupies residues 1 to 23 (MKKVSTLDLLFVAIMGVSPAAFA). Positions 24–197 (ADLIDVSKLP…VLDQWEGLAH (174 aa)) are excised as a propeptide. Residues Cys-227 and Cys-255 are joined by a disulfide bond. Residue Asp-333 coordinates Ca(2+). Position 337 (His-337) interacts with Zn(2+). Glu-338 is an active-site residue. Zn(2+)-binding residues include His-341 and Glu-361. Glu-369, Glu-372, Asp-380, and Leu-382 together coordinate Ca(2+). His-420 (proton donor) is an active-site residue. Cysteines 467 and 494 form a disulfide.

Belongs to the peptidase M4 family. Monomer. It depends on Ca(2+) as a cofactor. Zn(2+) serves as cofactor. In terms of processing, made as a membrane-associated pre-pro-protein, which is exported to the periplasm (yielding pro-elastase) with removal of the signal peptide. Under certain conditions pro-elastase can accumulate. The pro-peptide is removed in the periplasm yielding a (mature length) 33 kDa protein, probably by autocatalysis. The pro-peptide probably remains associated with elastase and can be secreted. Further alterations (perhaps processing) seems to be required before secretion into the extracellular space.

Its subcellular location is the secreted. The enzyme catalyses Hydrolysis of proteins including elastin, collagen types III and IV, fibronectin and immunoglobulin A, generally with bulky hydrophobic group at P1'. Insulin B chain cleavage pattern identical to that of thermolysin, but specificity differs in other respects.. With respect to regulation, inhibited by phosphoramidon. Cleaves host elastin, collagen, IgG, and several complement components as well as endogenous pro-aminopeptidase. Autocatalyses processing of its pro-peptide. Processes the pro-peptide of pro-chitin-binding protein (cbpD). Involved in the pathogenesis of P.aeruginosa infections. The chain is Elastase (lasB) from Pseudomonas aeruginosa (strain ATCC 15692 / DSM 22644 / CIP 104116 / JCM 14847 / LMG 12228 / 1C / PRS 101 / PAO1).